Here is a 365-residue protein sequence, read N- to C-terminus: Succinyl-diaminopimelate desuccinylase (365 aa).

Residue His-65 participates in Zn(2+) binding. Asp-67 is an active-site residue. Position 96 (Asp-96) interacts with Zn(2+). Glu-126 serves as the catalytic Proton acceptor. Zn(2+)-binding residues include Glu-127, Glu-155, and His-340.

Belongs to the peptidase M20A family. DapE subfamily. As to quaternary structure, homodimer. Requires Zn(2+) as cofactor. Co(2+) serves as cofactor.

It catalyses the reaction N-succinyl-(2S,6S)-2,6-diaminopimelate + H2O = (2S,6S)-2,6-diaminopimelate + succinate. It functions in the pathway amino-acid biosynthesis; L-lysine biosynthesis via DAP pathway; LL-2,6-diaminopimelate from (S)-tetrahydrodipicolinate (succinylase route): step 3/3. In terms of biological role, catalyzes the hydrolysis of N-succinyl-L,L-diaminopimelic acid (SDAP), forming succinate and LL-2,6-diaminopimelate (DAP), an intermediate involved in the bacterial biosynthesis of lysine and meso-diaminopimelic acid, an essential component of bacterial cell walls. In Campylobacter jejuni subsp. doylei (strain ATCC BAA-1458 / RM4099 / 269.97), this protein is Succinyl-diaminopimelate desuccinylase.